The chain runs to 425 residues: Threonylcarbamoyladenosine tRNA methylthiotransferase (425 aa).

The Radical SAM core domain occupies 60 to 295 (RKNELIEVLS…RSYTRYTDER (236 aa)). [4Fe-4S] cluster contacts are provided by cysteine 74, cysteine 78, and cysteine 81. In terms of domain architecture, TRAM spans 293-355 (DERIGELHRV…KFSMISKPAS (63 aa)). The helical transmembrane segment at 362–382 (PLSLMHLFPLAVFCLVLITLY) threads the bilayer.

It belongs to the methylthiotransferase family. CDKAL1 subfamily. It depends on [4Fe-4S] cluster as a cofactor.

The protein localises to the membrane. It carries out the reaction N(6)-L-threonylcarbamoyladenosine(37) in tRNA + (sulfur carrier)-SH + AH2 + 2 S-adenosyl-L-methionine = 2-methylsulfanyl-N(6)-L-threonylcarbamoyladenosine(37) in tRNA + (sulfur carrier)-H + 5'-deoxyadenosine + L-methionine + A + S-adenosyl-L-homocysteine + 2 H(+). Catalyzes the methylthiolation of N6-threonylcarbamoyladenosine (t(6)A), leading to the formation of 2-methylthio-N6-threonylcarbamoyladenosine (ms(2)t(6)A) at position 37 in tRNAs that read codons beginning with adenine. The sequence is that of Threonylcarbamoyladenosine tRNA methylthiotransferase from Caenorhabditis elegans.